Here is a 320-residue protein sequence, read N- to C-terminus: GTP 3',8-cyclase (320 aa).

A Radical SAM core domain is found at 5-222; it reads KLSRPLKVLR…LMKKEFTFYP (218 aa). Residue Arg-14 participates in GTP binding. The [4Fe-4S] cluster site is built by Cys-21, Cys-25, and Cys-28. Arg-65 is a binding site for GTP. An S-adenosyl-L-methionine-binding site is contributed by Gly-69. Residue Thr-96 participates in GTP binding. Ser-120 lines the S-adenosyl-L-methionine pocket. A GTP-binding site is contributed by Lys-157. Met-191 contributes to the S-adenosyl-L-methionine binding site. The [4Fe-4S] cluster site is built by Cys-253 and Cys-256. GTP is bound at residue 258–260; the sequence is RIR. [4Fe-4S] cluster is bound at residue Cys-270.

The protein belongs to the radical SAM superfamily. MoaA family. Monomer and homodimer. The cofactor is [4Fe-4S] cluster.

The enzyme catalyses GTP + AH2 + S-adenosyl-L-methionine = (8S)-3',8-cyclo-7,8-dihydroguanosine 5'-triphosphate + 5'-deoxyadenosine + L-methionine + A + H(+). It participates in cofactor biosynthesis; molybdopterin biosynthesis. Its function is as follows. Catalyzes the cyclization of GTP to (8S)-3',8-cyclo-7,8-dihydroguanosine 5'-triphosphate. This is GTP 3',8-cyclase from Aquifex aeolicus (strain VF5).